Reading from the N-terminus, the 95-residue chain is Transcription and mRNA export factor ENY2-2 (95 aa).

Belongs to the ENY2 family. In terms of assembly, component of the nuclear pore complex (NPC)-associated TREX-2 complex (transcription and export complex 2). Component of the SAGA transcription coactivator-HAT complex. Within the SAGA complex, participates in a subcomplex of SAGA called the DUB module (deubiquitination module).

The protein localises to the nucleus. Its subcellular location is the nucleoplasm. In terms of biological role, involved in mRNA export coupled transcription activation by association with both the TREX-2 and the SAGA complexes. The transcription regulatory histone acetylation (HAT) complex SAGA is a multiprotein complex that activates transcription by remodeling chromatin and mediating histone acetylation and deubiquitination. Within the SAGA complex, participates in a subcomplex that specifically deubiquitinates histones. The SAGA complex is recruited to specific gene promoters by activators, where it is required for transcription. The TREX-2 complex functions in docking export-competent ribonucleoprotein particles (mRNPs) to the nuclear entrance of the nuclear pore complex (nuclear basket). TREX-2 participates in mRNA export and accurate chromatin positioning in the nucleus by tethering genes to the nuclear periphery. This is Transcription and mRNA export factor ENY2-2 (eny2-2) from Salmo salar (Atlantic salmon).